Reading from the N-terminus, the 280-residue chain is MNSPHQQQTADRRQVSLITGASRGIGRTLALTLARRGGTVVVNYKKNADLAQKTVAEVEEAGGQGFAVQADVETTEGVTALFDEVAQRCGRLDHFVSNAAASAFKNIVDLGPHHLDRSYAMNLRPFVLGAQQAVKLMDNGGRIVALSSYGSVRAYPTYAMLGGMKAAIESWVRYMAVEFAPYGINVNAVNGGLIDSDSLEFFYNVEGMPPMQGVLDRIPARRPGTVQEMADTIAFLLGDGAGYITGQTLVVDGGLSIVAPPFFADAGEALELPPRPTRDA.

NADP(+) contacts are provided by residues 22–25, 71–72, and N98; these read SRGI and DV. Active-site proton acceptor residues include Y158 and K165. NADP(+) is bound by residues K165 and 194–196; that span reads IDS.

The protein belongs to the short-chain dehydrogenases/reductases (SDR) family. Homodimer.

The enzyme catalyses (4R,5R)-4,5-dihydroxycyclohex-2-ene-1-carbonyl-CoA + NADP(+) = (3R,4R)-3,4-dihydroxycyclohexa-1,5-diene-1-carbonyl-CoA + NADPH + H(+). It carries out the reaction (3S)-3-hydroxycyclohexane-1-carbonyl-CoA + NADP(+) = (5S)-5-hydroxycyclohex-1-ene-1-carbonyl-CoA + NADPH + H(+). The catalysed reaction is cyclohexane-1-carbonyl-CoA + NADP(+) = cyclohex-1-ene-1-carbonyl-CoA + NADPH + H(+). Its pathway is antibiotic biosynthesis. Its activity is regulated as follows. Inhibited by the thiol inhibitors p-chloromercuribenzoate, N-ethylmaleimide and iodoacetamide. Also inhibited by various divalent cations. Involved in the biosynthesis of the antifungal antibiotic ansatrienin A (mycotrienin I). Catalyzes three of the reductive steps involved in the formation of the cyclohexanecarboxylic acid (CHC) moiety of ansatrienin from shikimic acid. Can use 3,4-dihydroxycyclohexa-1,5-diene-1-carbonyl-CoA, 5-hydroxycyclohex-1-ene-1-carbonyl-CoA and cyclohex-1-ene-1-carbonyl-CoA as substrates. The protein is 1-cyclohexenylcarbonyl-CoA reductase of Streptomyces collinus.